The following is a 152-amino-acid chain: Small ribosomal subunit protein uS11A (152 aa).

Positions 131–152 (EDVTPIPSDSTRRKGGRRGRRL) are disordered. Basic residues predominate over residues 143 to 152 (RKGGRRGRRL).

The protein belongs to the universal ribosomal protein uS11 family.

The sequence is that of Small ribosomal subunit protein uS11A from Anopheles gambiae (African malaria mosquito).